Consider the following 331-residue polypeptide: Putative ankyrin repeat protein FPV012 (331 aa).

ANK repeat units follow at residues 11-40, 44-73, 77-106, and 110-139; these read DGYT…NPNT, DSYT…NVDK, DGYT…NPNY, and YGIT…NCNQ.

The sequence is that of Putative ankyrin repeat protein FPV012 from Vertebrata (FPV).